A 355-amino-acid chain; its full sequence is Protein DVR-1 (355 aa).

The N-terminal stretch at 1 to 15 is a signal peptide; that stretch reads MFLVLLRACLLTLSL. The propeptide occupies 16–240; it reads CSPAEDDGLV…PLQCRSRRKR (225 aa). 3 N-linked (GlcNAc...) asparagine glycosylation sites follow: N108, N179, and N296. Disulfide bonds link C254–C320, C283–C352, and C287–C354.

Belongs to the TGF-beta family. In terms of assembly, homodimer. Abundant in ovaries and eggs, and equally distributed among all blastomeres.

It localises to the secreted. Serves to facilitate the differentiation of either mesoderm or endoderm either as a cofactor in an instructive signal or by providing permissive environment. The protein is Protein DVR-1 (dvr1) of Danio rerio (Zebrafish).